The chain runs to 369 residues: GDSL esterase/lipase At5g41890 (369 aa).

Ser32 functions as the Nucleophile in the catalytic mechanism. Residues Asp334 and His337 contribute to the active site.

Belongs to the 'GDSL' lipolytic enzyme family.

The protein is GDSL esterase/lipase At5g41890 of Arabidopsis thaliana (Mouse-ear cress).